A 139-amino-acid chain; its full sequence is D-ribose pyranase (139 aa).

Residue histidine 20 is the Proton donor of the active site. Residues aspartate 28, histidine 106, and 128 to 130 (YAN) contribute to the substrate site.

Belongs to the RbsD / FucU family. RbsD subfamily. In terms of assembly, homodecamer.

Its subcellular location is the cytoplasm. The catalysed reaction is beta-D-ribopyranose = beta-D-ribofuranose. It functions in the pathway carbohydrate metabolism; D-ribose degradation; D-ribose 5-phosphate from beta-D-ribopyranose: step 1/2. Catalyzes the interconversion of beta-pyran and beta-furan forms of D-ribose. The chain is D-ribose pyranase from Photorhabdus laumondii subsp. laumondii (strain DSM 15139 / CIP 105565 / TT01) (Photorhabdus luminescens subsp. laumondii).